Reading from the N-terminus, the 449-residue chain is Phosphoglucosamine mutase (449 aa).

The Phosphoserine intermediate role is filled by Ser100. Residues Ser100, Asp241, Asp243, and Asp245 each contribute to the Mg(2+) site. Ser100 is modified (phosphoserine).

This sequence belongs to the phosphohexose mutase family. It depends on Mg(2+) as a cofactor. Post-translationally, activated by phosphorylation.

It carries out the reaction alpha-D-glucosamine 1-phosphate = D-glucosamine 6-phosphate. Catalyzes the conversion of glucosamine-6-phosphate to glucosamine-1-phosphate. The chain is Phosphoglucosamine mutase from Clostridium kluyveri (strain NBRC 12016).